The following is a 640-amino-acid chain: tRNA-dihydrouridine(47) synthase [NAD(P)(+)]-like (640 aa).

Residues 1 to 10 (MAEVAEVAAE) show a composition bias toward low complexity. Disordered stretches follow at residues 1–22 (MAEVAEVAAESGGGGDSGVGAC) and 47–106 (DKQE…PHMK). Alanine 2 carries the post-translational modification N-acetylalanine. The span at 64 to 91 (PEAKRIRLEDGQENGKTEVAVESHERQV) shows a compositional bias: basic and acidic residues. Over residues 92–106 (PKRARGQNKSRPHMK) the composition is skewed to basic residues. C3H1-type zinc fingers lie at residues 110-140 (YDKERLCPSLLQESATPCAFGDRCRFLHDVG) and 148-178 (ADLGPHCVLFNTFGRCPYSMTCRFAGAHLGP). Residue serine 267 is modified to Phosphoserine. Residues 301-303 (PLT) and glutamine 355 contribute to the FMN site. Cysteine 386 functions as the Proton donor in the catalytic mechanism. Lysine 406 is covalently cross-linked (Glycyl lysine isopeptide (Lys-Gly) (interchain with G-Cter in SUMO2)). Residues lysine 425, histidine 455, 487-489 (NGD), and 510-511 (AR) each bind FMN.

The protein belongs to the Dus family. Dus3 subfamily. Requires FMN as cofactor.

The enzyme catalyses 5,6-dihydrouridine(47) in tRNA + NAD(+) = uridine(47) in tRNA + NADH + H(+). It carries out the reaction 5,6-dihydrouridine(47) in tRNA + NADP(+) = uridine(47) in tRNA + NADPH + H(+). It catalyses the reaction a 5,6-dihydrouridine in mRNA + NAD(+) = a uridine in mRNA + NADH + H(+). The catalysed reaction is a 5,6-dihydrouridine in mRNA + NADP(+) = a uridine in mRNA + NADPH + H(+). Catalyzes the synthesis of dihydrouridine, a modified base, in various RNAs, such as tRNAs, mRNAs and some long non-coding RNAs (lncRNAs). Mainly modifies the uridine in position 47 (U47) in the D-loop of most cytoplasmic tRNAs. Also able to mediate the formation of dihydrouridine in some mRNAs, thereby regulating their translation. The chain is tRNA-dihydrouridine(47) synthase [NAD(P)(+)]-like from Rattus norvegicus (Rat).